We begin with the raw amino-acid sequence, 179 residues long: ATP-dependent protease subunit HslV (179 aa).

Residue threonine 7 is part of the active site. Na(+) is bound by residues glycine 162, cysteine 165, and threonine 168.

This sequence belongs to the peptidase T1B family. HslV subfamily. In terms of assembly, a double ring-shaped homohexamer of HslV is capped on each side by a ring-shaped HslU homohexamer. The assembly of the HslU/HslV complex is dependent on binding of ATP.

It localises to the cytoplasm. It catalyses the reaction ATP-dependent cleavage of peptide bonds with broad specificity.. Allosterically activated by HslU binding. Protease subunit of a proteasome-like degradation complex believed to be a general protein degrading machinery. The sequence is that of ATP-dependent protease subunit HslV from Teredinibacter turnerae (strain ATCC 39867 / T7901).